A 93-amino-acid polypeptide reads, in one-letter code: MLRGEIWQVDLDPARGSAANMRRPAVIVSNDRANAAAIRLDRGVVPVVPVTSNTEKVPIPGVVAGSERWPGRRFEGAGPAGWIRRCATSPLPS.

It belongs to the PemK/MazF family. In terms of assembly, forms a complex with cognate antitoxin MazE1.

Functionally, toxic component of a type II toxin-antitoxin (TA) system, its cognate antitoxin is MazE1. Probably an endoribonuclease. This Mycobacterium tuberculosis (strain ATCC 25618 / H37Rv) protein is Probable endoribonuclease MazF1 (mazF1).